Here is a 591-residue protein sequence, read N- to C-terminus: NADH-quinone oxidoreductase subunit C/D (591 aa).

Positions 1–182 are NADH dehydrogenase I subunit C; the sequence is MVTVVENIDP…TPYFLNTAKQ (182 aa). Residues 206–591 form an NADH dehydrogenase I subunit D region; the sequence is DFMFLNIGPN…IDVVMADCDR (386 aa).

It in the N-terminal section; belongs to the complex I 30 kDa subunit family. In the C-terminal section; belongs to the complex I 49 kDa subunit family. NDH-1 is composed of 13 different subunits. Subunits NuoB, CD, E, F, and G constitute the peripheral sector of the complex.

It localises to the cell inner membrane. The catalysed reaction is a quinone + NADH + 5 H(+)(in) = a quinol + NAD(+) + 4 H(+)(out). Functionally, NDH-1 shuttles electrons from NADH, via FMN and iron-sulfur (Fe-S) centers, to quinones in the respiratory chain. The immediate electron acceptor for the enzyme in this species is believed to be ubiquinone. Couples the redox reaction to proton translocation (for every two electrons transferred, four hydrogen ions are translocated across the cytoplasmic membrane), and thus conserves the redox energy in a proton gradient. This chain is NADH-quinone oxidoreductase subunit C/D, found in Psychrobacter arcticus (strain DSM 17307 / VKM B-2377 / 273-4).